The chain runs to 420 residues: Pectate lyase (420 aa).

The N-terminal stretch at 1–21 (MKKVMLATALFLGLTPAGANA) is a signal peptide. The interval 117 to 139 (TWGKKEPSGTQEEARARSQKNQK) is disordered. The span at 119–132 (GKKEPSGTQEEARA) shows a compositional bias: basic and acidic residues. D205, D244, and D248 together coordinate Ca(2+). R300 is an active-site residue.

The protein belongs to the polysaccharide lyase 1 family. In terms of assembly, monomer. Ca(2+) serves as cofactor.

The protein resides in the secreted. The catalysed reaction is Eliminative cleavage of (1-&gt;4)-alpha-D-galacturonan to give oligosaccharides with 4-deoxy-alpha-D-galact-4-enuronosyl groups at their non-reducing ends.. Its pathway is glycan metabolism; pectin degradation; 2-dehydro-3-deoxy-D-gluconate from pectin: step 2/5. Functionally, produces unsaturated products from polygalacturonate. The polypeptide is Pectate lyase (pel) (Bacillus subtilis (strain 168)).